The following is a 239-amino-acid chain: Diablo IAP-binding mitochondrial protein (239 aa).

The transit peptide at 1 to 22 directs the protein to the mitochondrion; that stretch reads MAVLKSWLSRSVTLLFRYRQCL. An IAP-binding motif is present at residues 56 to 60; that stretch reads AVPIA. The interval 217 to 239 is disordered; sequence RQKTQEEGEERAESEQEAYLRED.

It belongs to the Smac/DIABLO protein family. As to quaternary structure, homodimer. Interacts with BEX3. Interacts with BIRC2/c-IAP1 (via BIR3 domain). Interacts with BIRC6/BRUCE. Interacts with BIRC7/livin. Interacts with XIAP/BIRC4 (via BIR3 domain). Interacts with the monomeric and dimeric form of BIRC5/survivin. Interacts with AREL1 (via HECT domain); in the cytoplasm following induction of apoptosis. Ubiquitinated by BIRC7/livin. Ubiquitinated by BIRC6. Post-translationally, the precursor form is proteolytically cleaved by mitochondrial processing peptidase MPP to remove the transit peptide and produce an intermediate form. This is then processed by PARL to produce the mature cleaved form which is released from mitochondria into the cytosol in apoptotic cells.

It localises to the mitochondrion. The protein localises to the cytoplasm. Its subcellular location is the cytosol. Functionally, promotes apoptosis by activating caspases in the cytochrome c/Apaf-1/caspase-9 pathway. Acts by opposing the inhibitory activity of inhibitor of apoptosis proteins (IAP). Inhibits the activity of BIRC6/BRUCE by inhibiting its binding to caspases. The chain is Diablo IAP-binding mitochondrial protein from Pongo abelii (Sumatran orangutan).